Here is a 205-residue protein sequence, read N- to C-terminus: Guanylate kinase (205 aa).

The 179-residue stretch at 18–196 (PKLFTISAPA…AYQVLRSIFI (179 aa)) folds into the Guanylate kinase-like domain. Residue 25 to 32 (APAGAGKT) participates in ATP binding.

The protein belongs to the guanylate kinase family.

Its subcellular location is the cytoplasm. It catalyses the reaction GMP + ATP = GDP + ADP. Essential for recycling GMP and indirectly, cGMP. The protein is Guanylate kinase (gmk) of Chlamydia muridarum (strain MoPn / Nigg).